The chain runs to 238 residues: Large ribosomal subunit protein uL5c (238 aa).

This sequence belongs to the universal ribosomal protein uL5 family. Part of the 50S ribosomal subunit; contacts the 5S rRNA.

The protein resides in the plastid. It localises to the chloroplast. Its function is as follows. Binds 5S rRNA, forms part of the central protuberance of the 50S subunit. In Trieres chinensis (Marine centric diatom), this protein is Large ribosomal subunit protein uL5c (rpl5).